The primary structure comprises 90 residues: Lectin-1 (90 aa).

Q1 carries the pyrrolidone carboxylic acid modification. A disulfide bridge connects residues C46 and C71.

The N-terminus is blocked. Post-translationally, contains seven disulfide bonds. In terms of processing, proteolytically cleaved. Major form may consist of cleaved, disulfide-bonded subunits.

Functionally, lectin with specificity for complex N-linked glycans and O-linked glycans. Has hemagglutinating activity towards rabbit erythrocytes that is inhibited by N-acetyl-D-galactosamine. The polypeptide is Lectin-1 (Hypnea cervicornis (Brazilian red alga)).